The following is a 274-amino-acid chain: Probable eukaryotic translation initiation factor 3 subunit J (274 aa).

Disordered stretches follow at residues 1-110 and 207-245; these read MDSW…KEAM and KEQQ…NVNS. Residues 38 to 47 are compositionally biased toward acidic residues; sequence DEEDEDEEEN. The segment covering 52-73 has biased composition (low complexity); the sequence is QNDSHSVSQKSSSSSQNDQGSN. The segment covering 82 to 110 has biased composition (basic and acidic residues); that stretch reads IQERNFEKAIKASEAAAKEESLESSKEAM. The segment covering 219-234 has biased composition (low complexity); it reads AAAPAAKPVSTAAPSK.

The protein belongs to the eIF-3 subunit J family. Component of the eukaryotic translation initiation factor 3 (eIF-3) complex. The eIF-3 complex appears to include tif32/eif3a, SPAC25G10.08/eif3b, tif33/eif3c, SPBC4C3.07/eif3f, tif35/eif3g and sum1/eif3i. This set of common subunits may also associate exclusively with either moe1/eif3d and int6/eif3e, or with SPAC821.05/eif3h and SPAC1751.03/eif3m. The eIF-3 complex may also include SPAC3A12.13c/eif3j. Interacts with sad1.

The protein localises to the cytoplasm. Functionally, component of the eukaryotic translation initiation factor 3 (eIF-3) complex, which is involved in protein synthesis of a specialized repertoire of mRNAs and, together with other initiation factors, stimulates binding of mRNA and methionyl-tRNAi to the 40S ribosome. The eIF-3 complex specifically targets and initiates translation of a subset of mRNAs involved in cell proliferation. The polypeptide is Probable eukaryotic translation initiation factor 3 subunit J (Schizosaccharomyces pombe (strain 972 / ATCC 24843) (Fission yeast)).